A 581-amino-acid chain; its full sequence is Guanine nucleotide-binding protein-like 3 homolog (581 aa).

Residues 1 to 49 (MALKRLKTKKSKRLTGRLKHKIEKKVRDHNKKERRAAKKNPKKGSKKQK) are compositionally biased toward basic residues. Positions 1–50 (MALKRLKTKKSKRLTGRLKHKIEKKVRDHNKKERRAAKKNPKKGSKKQKL) are disordered. The stretch at 64–108 (LKEVEEAKQRQEAERLARREAFKAEREQNKFKTLESMVEDADMRS) forms a coiled coil. The residue at position 99 (Ser-99) is a Phosphoserine. Residues 141–325 (FKEFRKVIEN…LIDCPGIVFT (185 aa)) enclose the CP-type G domain. GTP contacts are provided by residues 189 to 192 (NKAD), 274 to 281 (GIPNVGKS), and 318 to 321 (DCPG). A compositionally biased stretch (basic and acidic residues) spans 500–517 (KPAKGRKRKLDEEKEKVD). A disordered region spans residues 500–519 (KPAKGRKRKLDEEKEKVDPS).

Belongs to the TRAFAC class YlqF/YawG GTPase family.

Its subcellular location is the nucleus. The protein localises to the nucleolus. May play a role in regulating cellular proliferation. The sequence is that of Guanine nucleotide-binding protein-like 3 homolog (Ns1) from Drosophila melanogaster (Fruit fly).